The sequence spans 225 residues: Small ribosomal subunit protein uS3 (225 aa).

The 70-residue stretch at 18-87 (VDEYLAKQFY…NPQITVTSVE (70 aa)) folds into the KH type-2 domain.

The protein belongs to the universal ribosomal protein uS3 family. As to quaternary structure, part of the 30S ribosomal subunit.

In terms of biological role, binds the lower part of the 30S subunit head. The polypeptide is Small ribosomal subunit protein uS3 (Sulfurisphaera tokodaii (strain DSM 16993 / JCM 10545 / NBRC 100140 / 7) (Sulfolobus tokodaii)).